Here is a 483-residue protein sequence, read N- to C-terminus: MASLLWGGDAGAAESERLNSHFSNLVHPRKNLRGIRSTTVPNIDGSLNTEEDDDEDDVVDLAANSLLNKLIRQSLVESSHRVEVLQKDPSSPLYSVKTFEELRLKEELLKGIYAMGFNRPSKIQEMALPMMLAHPPQNLIAQSQSGTGKTAAFVLAMLNRVNALELFPQCLCLAPTYELALQTGRVVERMGKFCVDVEVMYAIRGNRIPRGTDVTKQIVIGTPGTVLDWCFKRKLIDLTKIRVFVLDEADVMIDTQGFSDQSIRIQRALPSECQMLLFSATFEDSVWQFAERIIPDPNVIKLRKEELTLNNIRQYYVLCENRKDKYQALCNIYGGITIGQAIIFCQTRRNAKWLTVEMMQDGHQVSLLSGELTVEQRASIIQRFRDGKEKVLITTNVCARGIDVKQVTIVVNFDLPVNQSEEPDYETYLHRIGRTGRFGKKGLAFNMIEVDKLPLLMKIQDHFNSSIKQLDPEDMDEIEKIEY.

Phosphothreonine is present on T49. A Nuclear export signal motif is present at residues 61–74 (LAANSLLNKLIRQS). The Q motif motif lies at 97 to 125 (KTFEELRLKEELLKGIYAMGFNRPSKIQE). Positions 100–114 (EELRLKEELLKGIYA) match the Nuclear localization signal motif. A Helicase ATP-binding domain is found at 130 to 300 (MMLAHPPQNL…ERIIPDPNVI (171 aa)). Residue 143 to 150 (SQSGTGKT) coordinates ATP. Residues 247 to 250 (DEAD) carry the DEAD box motif. One can recognise a Helicase C-terminal domain in the interval 311–478 (NIRQYYVLCE…QLDPEDMDEI (168 aa)).

This sequence belongs to the DEAD box helicase family. Phosphorylated on threonine residues. The phosphorylated form is found in the cytoplasm but not in the nucleus. As to expression, isoform 1 is expressed in germ cells. Isoform 2 is highly expressed in Leydig cells and weakly expressed in the pituitary and hypothalamus. Isoform 3 is weakly expressed only in germ cells.

It is found in the cytoplasm. It localises to the nucleus. The enzyme catalyses ATP + H2O = ADP + phosphate + H(+). Functionally, ATP-dependent RNA helicase. Required for mRNA export and translation regulation during spermatid development. This is ATP-dependent RNA helicase DDX25 (Ddx25) from Rattus norvegicus (Rat).